The following is a 275-amino-acid chain: Biotin synthase (275 aa).

Residues 1-217 (MLCAICNVSS…DTAKTLPQCR (217 aa)) form the Radical SAM core domain. Residues C13, C17, and C20 each contribute to the [4Fe-4S] cluster site. [2Fe-2S] cluster contacts are provided by C57, C92, C150, and R217.

The protein belongs to the radical SAM superfamily. Biotin synthase family. In terms of assembly, homodimer. [4Fe-4S] cluster is required as a cofactor. Requires [2Fe-2S] cluster as cofactor.

It carries out the reaction (4R,5S)-dethiobiotin + (sulfur carrier)-SH + 2 reduced [2Fe-2S]-[ferredoxin] + 2 S-adenosyl-L-methionine = (sulfur carrier)-H + biotin + 2 5'-deoxyadenosine + 2 L-methionine + 2 oxidized [2Fe-2S]-[ferredoxin]. The protein operates within cofactor biosynthesis; biotin biosynthesis; biotin from 7,8-diaminononanoate: step 2/2. Its function is as follows. Catalyzes the conversion of dethiobiotin (DTB) to biotin by the insertion of a sulfur atom into dethiobiotin via a radical-based mechanism. This Campylobacter fetus subsp. fetus (strain 82-40) protein is Biotin synthase.